A 119-amino-acid chain; its full sequence is Hisactophilin-3 (119 aa).

Residue Gly-2 is the site of N-myristoyl glycine attachment. Residues 8-110 form a contains several HHXH repeats region; sequence SHHGHFLSAE…SIYTTHHHHH (103 aa). Tandem repeats lie at residues 34–47 and 75–87. Positions 34 to 87 are 2 X 13 AA approximate repeats; sequence FHVENHGHHKVAIRTHANKYVSINDNNDVYISHHFHGEHSLFHLEHHGGKVSIK.

It belongs to the hisactophilin family. In terms of processing, phosphorylated.

The protein localises to the cytoplasm. It is found in the cell membrane. In terms of biological role, may act as an intracellular pH sensor that links chemotactic signals to responses in the microfilament system of the cells by nucleating actin polymerization or stabilizing the filaments. This chain is Hisactophilin-3 (hatC), found in Dictyostelium discoideum (Social amoeba).